The following is a 256-amino-acid chain: 1-(5-phosphoribosyl)-5-[(5-phosphoribosylamino)methylideneamino] imidazole-4-carboxamide isomerase (256 aa).

The Proton acceptor role is filled by D8. D129 functions as the Proton donor in the catalytic mechanism.

Belongs to the HisA/HisF family.

Its subcellular location is the cytoplasm. It catalyses the reaction 1-(5-phospho-beta-D-ribosyl)-5-[(5-phospho-beta-D-ribosylamino)methylideneamino]imidazole-4-carboxamide = 5-[(5-phospho-1-deoxy-D-ribulos-1-ylimino)methylamino]-1-(5-phospho-beta-D-ribosyl)imidazole-4-carboxamide. The protein operates within amino-acid biosynthesis; L-histidine biosynthesis; L-histidine from 5-phospho-alpha-D-ribose 1-diphosphate: step 4/9. The chain is 1-(5-phosphoribosyl)-5-[(5-phosphoribosylamino)methylideneamino] imidazole-4-carboxamide isomerase from Prochlorococcus marinus (strain NATL1A).